The chain runs to 957 residues: UvrABC system protein A (957 aa).

33–40 (GLSGSGKS) contributes to the ATP binding site. The segment at 252 to 279 (CPHCGFSIGELEPRLFSFNSPFGACPTC) adopts a C4-type zinc-finger fold. ABC transporter domains lie at 309–587 (WTPI…PNSL) and 607–935 (PDGR…RYLK). ATP is bound at residue 639–646 (GVSGSGKS). The C4-type zinc-finger motif lies at 738-764 (CEACRGDGIIKIEMHFLPDVYVPCEVC).

It belongs to the ABC transporter superfamily. UvrA family. Forms a heterotetramer with UvrB during the search for lesions.

Its subcellular location is the cytoplasm. The UvrABC repair system catalyzes the recognition and processing of DNA lesions. UvrA is an ATPase and a DNA-binding protein. A damage recognition complex composed of 2 UvrA and 2 UvrB subunits scans DNA for abnormalities. When the presence of a lesion has been verified by UvrB, the UvrA molecules dissociate. This chain is UvrABC system protein A, found in Bacillus subtilis (strain 168).